A 322-amino-acid polypeptide reads, in one-letter code: tRNA U34 carboxymethyltransferase (322 aa).

Carboxy-S-adenosyl-L-methionine contacts are provided by residues Lys90, Trp104, Lys109, Gly129, 151 to 153 (DPT), 180 to 181 (IE), Met195, Tyr199, and Arg314.

This sequence belongs to the class I-like SAM-binding methyltransferase superfamily. CmoB family. As to quaternary structure, homotetramer.

The enzyme catalyses carboxy-S-adenosyl-L-methionine + 5-hydroxyuridine(34) in tRNA = 5-carboxymethoxyuridine(34) in tRNA + S-adenosyl-L-homocysteine + H(+). In terms of biological role, catalyzes carboxymethyl transfer from carboxy-S-adenosyl-L-methionine (Cx-SAM) to 5-hydroxyuridine (ho5U) to form 5-carboxymethoxyuridine (cmo5U) at position 34 in tRNAs. This chain is tRNA U34 carboxymethyltransferase, found in Citrobacter koseri (strain ATCC BAA-895 / CDC 4225-83 / SGSC4696).